Consider the following 212-residue polypeptide: Uridine kinase (212 aa).

13-20 (GASASGKS) is a binding site for ATP.

This sequence belongs to the uridine kinase family.

It localises to the cytoplasm. The enzyme catalyses uridine + ATP = UMP + ADP + H(+). The catalysed reaction is cytidine + ATP = CMP + ADP + H(+). It participates in pyrimidine metabolism; CTP biosynthesis via salvage pathway; CTP from cytidine: step 1/3. Its pathway is pyrimidine metabolism; UMP biosynthesis via salvage pathway; UMP from uridine: step 1/1. The polypeptide is Uridine kinase (Shewanella frigidimarina (strain NCIMB 400)).